A 470-amino-acid polypeptide reads, in one-letter code: Aromatic amino acid aminotransferase C569.07 (470 aa).

This sequence belongs to the class-I pyridoxal-phosphate-dependent aminotransferase family. Pyridoxal 5'-phosphate serves as cofactor.

It localises to the cytoplasm. It carries out the reaction an aromatic L-alpha-amino acid + 2-oxoglutarate = an aromatic oxo-acid + L-glutamate. Its function is as follows. Has aromatic amino acid transaminase activity. This is Aromatic amino acid aminotransferase C569.07 from Schizosaccharomyces pombe (strain 972 / ATCC 24843) (Fission yeast).